The primary structure comprises 358 residues: Phospho-N-acetylmuramoyl-pentapeptide-transferase (358 aa).

The next 10 helical transmembrane spans lie at 25–45, 73–93, 97–117, 134–154, 172–192, 197–217, 233–253, 261–281, 286–306, and 335–355; these read RTIY…PWVI, TMGG…WADL, YVWT…TDDY, MFWQ…VAGM, YLYI…VNLT, GLAI…AYIA, GAGE…GFLW, VFMG…LAVI, MLLV…IFQV, and KIIV…ISTL.

This sequence belongs to the glycosyltransferase 4 family. MraY subfamily. Mg(2+) serves as cofactor.

The protein localises to the cell inner membrane. It catalyses the reaction UDP-N-acetyl-alpha-D-muramoyl-L-alanyl-gamma-D-glutamyl-meso-2,6-diaminopimeloyl-D-alanyl-D-alanine + di-trans,octa-cis-undecaprenyl phosphate = di-trans,octa-cis-undecaprenyl diphospho-N-acetyl-alpha-D-muramoyl-L-alanyl-D-glutamyl-meso-2,6-diaminopimeloyl-D-alanyl-D-alanine + UMP. The protein operates within cell wall biogenesis; peptidoglycan biosynthesis. In terms of biological role, catalyzes the initial step of the lipid cycle reactions in the biosynthesis of the cell wall peptidoglycan: transfers peptidoglycan precursor phospho-MurNAc-pentapeptide from UDP-MurNAc-pentapeptide onto the lipid carrier undecaprenyl phosphate, yielding undecaprenyl-pyrophosphoryl-MurNAc-pentapeptide, known as lipid I. This Geobacter sulfurreducens (strain ATCC 51573 / DSM 12127 / PCA) protein is Phospho-N-acetylmuramoyl-pentapeptide-transferase.